Here is a 253-residue protein sequence, read N- to C-terminus: 3-deoxy-manno-octulosonate cytidylyltransferase (253 aa).

The protein belongs to the KdsB family.

The protein resides in the cytoplasm. The enzyme catalyses 3-deoxy-alpha-D-manno-oct-2-ulosonate + CTP = CMP-3-deoxy-beta-D-manno-octulosonate + diphosphate. The protein operates within nucleotide-sugar biosynthesis; CMP-3-deoxy-D-manno-octulosonate biosynthesis; CMP-3-deoxy-D-manno-octulosonate from 3-deoxy-D-manno-octulosonate and CTP: step 1/1. It functions in the pathway bacterial outer membrane biogenesis; lipopolysaccharide biosynthesis. Activates KDO (a required 8-carbon sugar) for incorporation into bacterial lipopolysaccharide in Gram-negative bacteria. This Geotalea daltonii (strain DSM 22248 / JCM 15807 / FRC-32) (Geobacter daltonii) protein is 3-deoxy-manno-octulosonate cytidylyltransferase.